Here is a 356-residue protein sequence, read N- to C-terminus: Dual-specificity RNA methyltransferase RlmN (356 aa).

Glu95 functions as the Proton acceptor in the catalytic mechanism. The region spanning 101 to 332 (EDERGTLCIS…VTVIRDRRGE (232 aa)) is the Radical SAM core domain. A disulfide bridge connects residues Cys108 and Cys338. [4Fe-4S] cluster is bound by residues Cys115, Cys119, and Cys122. Residues 165-166 (GE), Ser197, 219-221 (SLH), and Asn295 each bind S-adenosyl-L-methionine. Cys338 serves as the catalytic S-methylcysteine intermediate.

It belongs to the radical SAM superfamily. RlmN family. The cofactor is [4Fe-4S] cluster.

It localises to the cytoplasm. It carries out the reaction adenosine(2503) in 23S rRNA + 2 reduced [2Fe-2S]-[ferredoxin] + 2 S-adenosyl-L-methionine = 2-methyladenosine(2503) in 23S rRNA + 5'-deoxyadenosine + L-methionine + 2 oxidized [2Fe-2S]-[ferredoxin] + S-adenosyl-L-homocysteine. It catalyses the reaction adenosine(37) in tRNA + 2 reduced [2Fe-2S]-[ferredoxin] + 2 S-adenosyl-L-methionine = 2-methyladenosine(37) in tRNA + 5'-deoxyadenosine + L-methionine + 2 oxidized [2Fe-2S]-[ferredoxin] + S-adenosyl-L-homocysteine. Functionally, specifically methylates position 2 of adenine 2503 in 23S rRNA and position 2 of adenine 37 in tRNAs. m2A2503 modification seems to play a crucial role in the proofreading step occurring at the peptidyl transferase center and thus would serve to optimize ribosomal fidelity. This Magnetococcus marinus (strain ATCC BAA-1437 / JCM 17883 / MC-1) protein is Dual-specificity RNA methyltransferase RlmN.